The primary structure comprises 274 residues: Protein STAY-GREEN, chloroplastic (274 aa).

The transit peptide at 1–48 (MAAATSTMSLIPPITQQQRWHAADSLVVLASRRHDSRRRRRCRYVVPR) directs the protein to the chloroplast.

This sequence belongs to the staygreen family.

The protein resides in the plastid. Its subcellular location is the chloroplast. Involved in the disassembling mechanism of the intact light-harvesting complex of photosystem II (LHCPII) in the thylakoid membranes. Required to trigger chlorophyll degradation during natural and dark-induced leaf senescence. This chain is Protein STAY-GREEN, chloroplastic (SGR), found in Oryza sativa subsp. indica (Rice).